Consider the following 154-residue polypeptide: Small ribosomal subunit protein uS11c (154 aa).

It belongs to the universal ribosomal protein uS11 family. As to quaternary structure, part of the 30S ribosomal subunit.

It is found in the plastid. This is Small ribosomal subunit protein uS11c from Helicosporidium sp. subsp. Simulium jonesii (Green alga).